Reading from the N-terminus, the 200-residue chain is LexA repressor (200 aa).

The H-T-H motif DNA-binding region spans 29–48 (IRDIARAFRITPRGAIVHLN). Catalysis depends on for autocatalytic cleavage activity residues serine 120 and lysine 158.

This sequence belongs to the peptidase S24 family. As to quaternary structure, homodimer.

The enzyme catalyses Hydrolysis of Ala-|-Gly bond in repressor LexA.. Functionally, represses a number of genes involved in the response to DNA damage (SOS response), including recA and lexA. In the presence of single-stranded DNA, RecA interacts with LexA causing an autocatalytic cleavage which disrupts the DNA-binding part of LexA, leading to derepression of the SOS regulon and eventually DNA repair. The chain is LexA repressor from Pseudothermotoga lettingae (strain ATCC BAA-301 / DSM 14385 / NBRC 107922 / TMO) (Thermotoga lettingae).